The sequence spans 562 residues: Arginine--tRNA ligase (562 aa).

The 'HIGH' region motif lies at 129–139 (ANPTGPLHVGH).

This sequence belongs to the class-I aminoacyl-tRNA synthetase family. As to quaternary structure, monomer.

It localises to the cytoplasm. The catalysed reaction is tRNA(Arg) + L-arginine + ATP = L-arginyl-tRNA(Arg) + AMP + diphosphate. This Xylella fastidiosa (strain M23) protein is Arginine--tRNA ligase.